A 434-amino-acid chain; its full sequence is ATP-sensitive inward rectifier potassium channel 14 (434 aa).

Over 1-81 the chain is Cytoplasmic; sequence MGLARALRRL…LSDLFTTCVD (81 aa). The residue at position 79 (C79) is an S-nitrosocysteine. A helical membrane pass occupies residues 82-108; sequence VRWRWMCLLFSCSFLASWLLFGLTFWL. The Extracellular segment spans residues 109-131; the sequence is IASLHGDLAAPPPPAPCFSQVAS. The helical; Pore-forming intramembrane region spans 132–148; the sequence is FLAAFLFALETQTSIGY. A Selectivity filter motif is present at residues 145 to 150; sequence SIGYGV. The Extracellular segment spans residues 149–157; it reads GVRSVTEEC. Residues 158–185 form a helical membrane-spanning segment; the sequence is PAAVAAVVLQCIAGCVLDAFVVGAVMAK. At 186 to 434 the chain is on the cytoplasmic side; that stretch reads MAKPKKRNET…TPTLALTLPP (249 aa). The interval 398 to 434 is disordered; sequence QEEDEEEDTKEGTSAETPDRAASPQALTPTLALTLPP. The span at 407–416 shows a compositional bias: basic and acidic residues; the sequence is KEGTSAETPD. The segment covering 418–434 has biased composition (low complexity); the sequence is AASPQALTPTLALTLPP.

It belongs to the inward rectifier-type potassium channel (TC 1.A.2.1) family. KCNJ14 subfamily. As to expression, expressed predominantly in motoneurons of cranial nerve motor nuclei within the general somatic and special visceral motor cell column.

It is found in the membrane. The catalysed reaction is K(+)(in) = K(+)(out). Its activity is regulated as follows. Channel activity is regulated by variations of cytosolic pH; channels are activated by alkaline and inhibited by acidic pH values. Inhibited by Ba(2+) and Cs(+) in a voltage-dependent manner; sensitivity to those inhibitors is lower than in other Kir channels. Inward rectifier potassium channels are characterized by a greater tendency to allow potassium to flow into the cell rather than out of it. Their voltage dependence is regulated by the concentration of extracellular potassium; as external potassium is raised, the voltage range of the channel opening shifts to more positive voltages. The protein is ATP-sensitive inward rectifier potassium channel 14 (Kcnj14) of Rattus norvegicus (Rat).